The following is a 683-amino-acid chain: Heat shock protein homolog ECU03_0520 (683 aa).

This sequence belongs to the heat shock protein 70 family.

The protein resides in the cytoplasm. The protein is Heat shock protein homolog ECU03_0520 of Encephalitozoon cuniculi (strain GB-M1) (Microsporidian parasite).